The primary structure comprises 245 residues: Putative protein phosphatase 2C-like protein 45 (245 aa).

A PPM-type phosphatase domain is found at 1 to 188; it reads MEDRFSTITN…DDISVMLIPL (188 aa).

Belongs to the PP2C family.

The protein is Putative protein phosphatase 2C-like protein 45 of Arabidopsis thaliana (Mouse-ear cress).